Consider the following 179-residue polypeptide: Inner membrane-spanning protein YciB (179 aa).

Helical transmembrane passes span 3–23 (FLYD…FGIY), 49–69 (NALI…LWLQ), 76–96 (WKPT…QWLF), 119–139 (LNLA…YVAY), and 149–169 (FKLF…TLLL).

Belongs to the YciB family.

The protein resides in the cell inner membrane. Its function is as follows. Plays a role in cell envelope biogenesis, maintenance of cell envelope integrity and membrane homeostasis. This chain is Inner membrane-spanning protein YciB, found in Methylobacillus flagellatus (strain ATCC 51484 / DSM 6875 / VKM B-1610 / KT).